The primary structure comprises 533 residues: Peptide chain release factor 3 (533 aa).

Residues 11–284 (RRRRTFAIIS…ALVGLSPEPL (274 aa)) form the tr-type G domain. GTP contacts are provided by residues 20–27 (SHPDAGKT), 92–96 (DTPGH), and 146–149 (NKLD).

It belongs to the TRAFAC class translation factor GTPase superfamily. Classic translation factor GTPase family. PrfC subfamily.

The protein localises to the cytoplasm. In terms of biological role, increases the formation of ribosomal termination complexes and stimulates activities of RF-1 and RF-2. It binds guanine nucleotides and has strong preference for UGA stop codons. It may interact directly with the ribosome. The stimulation of RF-1 and RF-2 is significantly reduced by GTP and GDP, but not by GMP. This Ralstonia nicotianae (strain ATCC BAA-1114 / GMI1000) (Ralstonia solanacearum) protein is Peptide chain release factor 3.